The primary structure comprises 902 residues: Protein SYG1 (902 aa).

Residues 1–303 (MKFADHLTES…HTRELTTFMS (303 aa)) enclose the SPX domain. Over 1 to 404 (MKFADHLTES…RNNRSIVQML (404 aa)) the chain is Cytoplasmic. A phosphoserine mark is found at S172 and S179. The chain crosses the membrane as a helical span at residues 405 to 425 (VVGLGIGVSMTLITYTLYLGI). At 426-435 (SSEETSFTHK) the chain is on the extracellular side. Residues 436–456 (ILFPLWGGWYMVLLIAFLFLV) form a helical membrane-spanning segment. Over 457–497 (NCFIWHRTGINYRFIMLGEIQSKNGTQFFNNDFATSKIPLK) the chain is Cytoplasmic. A helical transmembrane segment spans residues 498 to 518 (LYFLTFFIVPCAVCSMLSFAL). Residues 519-522 (EKLT) lie on the Extracellular side of the membrane. The helical transmembrane segment at 523–543 (PLGFLYIGIVSFLFLCPSGLI) threads the bilayer. The Cytoplasmic segment spans residues 544-554 (PYWDKVVHTRK). Residues 555 to 575 (WLVVTLIRLMMSGFFPVEFGD) traverse the membrane as a helical segment. A topological domain (extracellular) is located at residue F576. A helical transmembrane segment spans residues 577 to 599 (FLGDIICSLTYSIADIAMFFCVY). The Cytoplasmic segment spans residues 600 to 732 (SHTPNNLCGS…NGSYSFSRKL (133 aa)). Residues 606–815 (LCGSSHSRAM…PIAQVGDDSM (210 aa)) form the EXS domain. The helical transmembrane segment at 733 to 753 (VYYFAMIWDILIRFEWIVYAI) threads the bilayer. The Extracellular segment spans residues 754-761 (APQTIQQS). Residues 762–782 (AVTSFILALLEVLRRFVWIIF) traverse the membrane as a helical segment. Residues 783 to 902 (RVENEHVANV…DSESEVESIM (120 aa)) are Cytoplasmic-facing. Phosphoserine is present on residues S859 and S860. Positions 882 to 902 (VNTVDDRSPETDSESEVESIM) are disordered. The segment covering 892 to 902 (TDSESEVESIM) has biased composition (acidic residues).

It belongs to the SYG1 (TC 2.A.94) family.

Its subcellular location is the cell membrane. Functionally, may function in G-protein coupled signal transduction. This Saccharomyces cerevisiae (strain ATCC 204508 / S288c) (Baker's yeast) protein is Protein SYG1 (SYG1).